Here is a 155-residue protein sequence, read N- to C-terminus: Prespore-specific protein E (155 aa).

The signal sequence occupies residues 1–20 (MRFISIFLIIVALCVSSSWA). 4 N-linked (GlcNAc...) asparagine glycosylation sites follow: Asn22, Asn82, Asn85, and Asn102. Residue Ser105 is glycosylated (O-linked (GlcNAc) serine). The GPI-like-anchor amidated asparagine moiety is linked to residue Asn133. Residues 134 to 155 (SADKVAVGIAIIFGALISLLAL) constitute a propeptide, removed in mature form.

The GPI-like-anchor contains a phosphoceramide group, rather than a phosphatidyl group.

It is found in the cell membrane. This Dictyostelium discoideum (Social amoeba) protein is Prespore-specific protein E (pspE).